Here is a 103-residue protein sequence, read N- to C-terminus: Co-chaperonin GroES (103 aa).

Belongs to the GroES chaperonin family. In terms of assembly, heptamer of 7 subunits arranged in a ring. Interacts with the chaperonin GroEL.

Its subcellular location is the cytoplasm. Its function is as follows. Together with the chaperonin GroEL, plays an essential role in assisting protein folding. The GroEL-GroES system forms a nano-cage that allows encapsulation of the non-native substrate proteins and provides a physical environment optimized to promote and accelerate protein folding. GroES binds to the apical surface of the GroEL ring, thereby capping the opening of the GroEL channel. This Prochlorococcus marinus (strain SARG / CCMP1375 / SS120) protein is Co-chaperonin GroES.